Consider the following 131-residue polypeptide: Phosphoribosyl-AMP cyclohydrolase (131 aa).

Residue Asp-78 coordinates Mg(2+). Cys-79 contacts Zn(2+). The Mg(2+) site is built by Asp-80 and Asp-82. 2 residues coordinate Zn(2+): Cys-96 and Cys-103.

It belongs to the PRA-CH family. As to quaternary structure, homodimer. Mg(2+) is required as a cofactor. The cofactor is Zn(2+).

It localises to the cytoplasm. It carries out the reaction 1-(5-phospho-beta-D-ribosyl)-5'-AMP + H2O = 1-(5-phospho-beta-D-ribosyl)-5-[(5-phospho-beta-D-ribosylamino)methylideneamino]imidazole-4-carboxamide. Its pathway is amino-acid biosynthesis; L-histidine biosynthesis; L-histidine from 5-phospho-alpha-D-ribose 1-diphosphate: step 3/9. Its function is as follows. Catalyzes the hydrolysis of the adenine ring of phosphoribosyl-AMP. The sequence is that of Phosphoribosyl-AMP cyclohydrolase from Thioalkalivibrio sulfidiphilus (strain HL-EbGR7).